The sequence spans 718 residues: MQEFDKSISFDGRDIRLKMGTLAPQAGGSVLIQSGDTAVLVTATRAKGRDGIDFLPLTVDYEGRLYAAGRIPGGFLRREGRPPEKATLISRLIDRPLRPLFPHWLRDELQIVATTLSMDEEVPPDVLAVTGASVAVILAQIPFKGPMAAVRVGLVGDDFIINPTYREVHNGDLDLVVAGTPAGIVMVEAGANQLPEQDIIEAIDFGYEAVQDLINAQRELMTDLGITLATSEPPPVNTAVEEFIANRASKKIITVLGQFDLGKDGRDAALDEIKATEVETAIAELPETDPVKQSVEEDPKLVGNLYKALTKKLMRKQIVDDGVRVDGRKLEQVRPISCEVGFLPRRVHGSGLFNRGLTQVLSLATLGSPGDAQDLADDLHPEDEKRYLHHYNFPPYSVGEARPMRSPGRREIGHGALAERAIIPVLPPQEDFPYVVRVVSEVLSSNGSTSMGSVCGSTLALMDAGVPIKKPVSGAAMGLIKEGDEIRILTDIQGIEDFLGDMDFKVAGTDSGITALQMDMKIDGLSMEVVSKAIMQALPARLHILDKMLATIREPRPELSPFAPRLLTLKIEPEHIGMVIGPGGKTIKGITEQTSCKIDIADDGTVTIASSEGERAERARQMIYNMTRKLNEGEVYLGRVTRIIPIGAFVEVLPGKEGMIHISQLTEGRVGKVEDEVGVGDEVIVKVREIDSKGRLNLTRLGIHPDEAAEARRNASRG.

Mg(2+)-binding residues include aspartate 497 and aspartate 503. Positions 564–623 (PRLLTLKIEPEHIGMVIGPGGKTIKGITEQTSCKIDIADDGTVTIASSEGERAERARQMI) constitute a KH domain. Residues 633–701 (GEVYLGRVTR…SKGRLNLTRL (69 aa)) enclose the S1 motif domain.

The protein belongs to the polyribonucleotide nucleotidyltransferase family. As to quaternary structure, interacts with RNase E (rne). Mg(2+) serves as cofactor.

It is found in the cytoplasm. It carries out the reaction RNA(n+1) + phosphate = RNA(n) + a ribonucleoside 5'-diphosphate. In terms of biological role, involved in mRNA degradation. Catalyzes the phosphorolysis of single-stranded polyribonucleotides processively in the 3'- to 5'-direction. The polypeptide is Polyribonucleotide nucleotidyltransferase (Synechocystis sp. (strain ATCC 27184 / PCC 6803 / Kazusa)).